The primary structure comprises 418 residues: Cell division protein FtsA (418 aa).

The protein belongs to the FtsA/MreB family. In terms of assembly, self-interacts. Interacts with FtsZ.

The protein resides in the cell inner membrane. Cell division protein that is involved in the assembly of the Z ring. May serve as a membrane anchor for the Z ring. The polypeptide is Cell division protein FtsA (Buchnera aphidicola subsp. Acyrthosiphon pisum (strain APS) (Acyrthosiphon pisum symbiotic bacterium)).